The primary structure comprises 349 residues: Tribbles homolog 3 (349 aa).

An interaction with DDIT3/CHOP region spans residues 1–122; that stretch reads MRATSLAASA…QHVARPTEVL (122 aa). A disordered region spans residues 35 to 57; sequence VRDEPEPGPTPSLPPASDLSPAV. Residues 63 to 310 form the Protein kinase domain; it reads LGPYILLERE…ALGILLHPWL (248 aa). The tract at residues 317-349 is disordered; it reads VSPPRSDRREMDQVVPDGPQLEEAEEGEVGLYG. Residues 336–349 show a composition bias toward acidic residues; sequence QLEEAEEGEVGLYG.

It belongs to the protein kinase superfamily. CAMK Ser/Thr protein kinase family. Tribbles subfamily. In terms of assembly, interacts with AKT1, AKT2, MAP2K1 and MAP2K7. Interacts with ATF4. Interacts with DDIT3/CHOP and inhibits its interaction with EP300/P300. Interacts with APOBEC3C. Interacts (via N-terminus) with APOBEC3A. Interacts with RELA. In terms of tissue distribution, detected only in the lung. Not detected in the heart, brain, spleen, liver, skeletal muscle, kidney and testis.

The protein resides in the nucleus. Its function is as follows. Inactive protein kinase which acts as a regulator of the integrated stress response (ISR), a process for adaptation to various stress. Inhibits the transcriptional activity of DDIT3/CHOP and is involved in DDIT3/CHOP-dependent cell death during ER stress. May play a role in programmed neuronal cell death but does not appear to affect non-neuronal cells. Acts as a negative feedback regulator of the ATF4-dependent transcription during the ISR: while TRIB3 expression is promoted by ATF4, TRIB3 protein interacts with ATF4 and inhibits ATF4 transcription activity. Disrupts insulin signaling by binding directly to Akt kinases and blocking their activation. May bind directly to and mask the 'Thr-308' phosphorylation site in AKT1. Interacts with the NF-kappa-B transactivator p65 RELA and inhibits its phosphorylation and thus its transcriptional activation activity. Interacts with MAPK kinases and regulates activation of MAP kinases. Can inhibit APOBEC3A editing of nuclear DNA. In Rattus norvegicus (Rat), this protein is Tribbles homolog 3 (Trib3).